A 515-amino-acid polypeptide reads, in one-letter code: GMP synthase [glutamine-hydrolyzing] (515 aa).

The Glutamine amidotransferase type-1 domain occupies 10–200 (TIIVLDFGSQ…VFGVCGCSEG (191 aa)). Residue C87 is the Nucleophile of the active site. Catalysis depends on residues H174 and E176. The GMPS ATP-PPase domain maps to 201-390 (WNMENFIEVE…LGIPDEIVWR (190 aa)). Position 228–234 (228–234 (SGGVDSS)) interacts with ATP.

In terms of assembly, homodimer.

The enzyme catalyses XMP + L-glutamine + ATP + H2O = GMP + L-glutamate + AMP + diphosphate + 2 H(+). Its pathway is purine metabolism; GMP biosynthesis; GMP from XMP (L-Gln route): step 1/1. Its function is as follows. Catalyzes the synthesis of GMP from XMP. This Bacillus thuringiensis subsp. konkukian (strain 97-27) protein is GMP synthase [glutamine-hydrolyzing].